A 320-amino-acid polypeptide reads, in one-letter code: Cytochrome f (320 aa).

An N-terminal signal peptide occupies residues 1-35 (MQNRNTFSWVKEPINRSISVLIIIYVITQTSISNA). Heme is bound by residues Tyr-36, Cys-56, Cys-59, and His-60. The helical transmembrane segment at 286 to 306 (VQGLLFFLASVTLAQIFLVLK) threads the bilayer.

It belongs to the cytochrome f family. In terms of assembly, the 4 large subunits of the cytochrome b6-f complex are cytochrome b6, subunit IV (17 kDa polypeptide, petD), cytochrome f and the Rieske protein, while the 4 small subunits are PetG, PetL, PetM and PetN. The complex functions as a dimer. Requires heme as cofactor.

The protein localises to the plastid. It is found in the chloroplast thylakoid membrane. In terms of biological role, component of the cytochrome b6-f complex, which mediates electron transfer between photosystem II (PSII) and photosystem I (PSI), cyclic electron flow around PSI, and state transitions. The sequence is that of Cytochrome f from Piper cenocladum (Ant piper).